Consider the following 1320-residue polypeptide: FERM and PDZ domain-containing protein 4 (1320 aa).

A WW domain is found at 33-66; sequence QVPPYGWEMMTNRDGRDYFINHMTQAIPFDDPRF. The region spanning 78–155 is the PDZ domain; the sequence is KVEMRRDPVL…SILLTVIQPY (78 aa). The FERM domain maps to 204-519; the sequence is NVLKVYLENG…GYYRLLVDSR (316 aa). Disordered stretches follow at residues 809–847, 897–927, 949–981, 1024–1050, 1114–1139, and 1204–1274; these read APPP…EIPV, YSPE…QKQS, TEFP…PPKV, KRKS…QQGT, PRGP…ADDA, and GHFS…ATFE. A compositionally biased stretch (low complexity) spans 900-913; sequence ESSSDSGNETNSSE. The span at 1204 to 1217 shows a compositional bias: polar residues; sequence GHFSLQSSQGSSVD. The span at 1223–1232 shows a compositional bias: low complexity; it reads GSSSSACATP.

As to quaternary structure, interacts (via C-terminus) with DLG1, DLG2, DLG3 and DLG4/PSD95. Interacts (via N-terminus) with ARHGEF7; the interaction is mediated by the PDZ domain. Interacts with GPSM2 (via TPR repeat region). As to expression, expressed in various regions of the brain, including cortex, hippocampus, cerebellum, olfactory bulb and medial habenular nucleus.

It is found in the cell projection. The protein resides in the dendritic spine. In terms of biological role, positive regulator of dendritic spine morphogenesis and density. Required for the maintenance of excitatory synaptic transmission. Binds phosphatidylinositol 4,5-bisphosphate. This is FERM and PDZ domain-containing protein 4 (Frmpd4) from Mus musculus (Mouse).